The sequence spans 184 residues: Cell wall protein phiA (184 aa).

Positions Met1–Ala21 are cleaved as a signal peptide. Asn58 carries an N-linked (GlcNAc...) asparagine glycan.

The protein belongs to the phiA family.

The protein resides in the secreted. It is found in the cell wall. In terms of biological role, cell wall protein involved in development of asexual structures such as phialide and conidium development, and thus required for spore formation. Plays a role as a general stress protectant produced by the fungus in competition with antagonistic bacteria. The sequence is that of Cell wall protein phiA from Aspergillus niger (strain ATCC MYA-4892 / CBS 513.88 / FGSC A1513).